A 460-amino-acid polypeptide reads, in one-letter code: uncharacterized protein (460 aa).

Positions 5 to 63 constitute a TRAM domain; it reads TWHQGELIEVAIADLSDTGDGVGRFAERVVFVPDTVPGDRVLVRLLHVKPNYAHGKLHQ. Cys-76, Cys-82, Cys-85, and Cys-164 together coordinate [4Fe-4S] cluster. Residues Gln-288, Tyr-317, Glu-338, and Asp-383 each contribute to the S-adenosyl-L-methionine site. The Nucleophile role is filled by Cys-410.

Belongs to the class I-like SAM-binding methyltransferase superfamily. RNA M5U methyltransferase family.

This is an uncharacterized protein from Nostoc sp. (strain PCC 7120 / SAG 25.82 / UTEX 2576).